A 506-amino-acid chain; its full sequence is Abscisic acid 8'-hydroxylase 2 (506 aa).

Residues 3-23 (FLLFFVFVTAAVLCFVVPAFL) traverse the membrane as a helical segment. C437 contributes to the heme binding site.

This sequence belongs to the cytochrome P450 family. It depends on heme as a cofactor. In internodes and expanding leaves. Weak expression in seedlings.

It localises to the membrane. It carries out the reaction 2-cis-(+)-abscisate + reduced [NADPH--hemoprotein reductase] + O2 = (+)-8'-hydroxyabscisate + oxidized [NADPH--hemoprotein reductase] + H2O + H(+). It participates in plant hormone degradation; abscisic acid degradation. Involved in the oxidative degradation of abscisic acid. The chain is Abscisic acid 8'-hydroxylase 2 (CYP707A6) from Oryza sativa subsp. indica (Rice).